Consider the following 417-residue polypeptide: NADH-quinone oxidoreductase subunit D (417 aa).

This sequence belongs to the complex I 49 kDa subunit family. In terms of assembly, NDH-1 is composed of 14 different subunits. Subunits NuoB, C, D, E, F, and G constitute the peripheral sector of the complex.

The protein localises to the cell inner membrane. The catalysed reaction is a quinone + NADH + 5 H(+)(in) = a quinol + NAD(+) + 4 H(+)(out). In terms of biological role, NDH-1 shuttles electrons from NADH, via FMN and iron-sulfur (Fe-S) centers, to quinones in the respiratory chain. The immediate electron acceptor for the enzyme in this species is believed to be ubiquinone. Couples the redox reaction to proton translocation (for every two electrons transferred, four hydrogen ions are translocated across the cytoplasmic membrane), and thus conserves the redox energy in a proton gradient. In Acidovorax sp. (strain JS42), this protein is NADH-quinone oxidoreductase subunit D.